The following is a 344-amino-acid chain: Photosystem II protein D1 (344 aa).

Threonine 2 carries the N-acetylthreonine modification. A Phosphothreonine modification is found at threonine 2. 3 consecutive transmembrane segments (helical) span residues 29-46, 118-133, and 142-156; these read YIGWFGCLMIPTLLTATS, HFFLGICAYMGREWEL, and WIAVAYSAPVAAATA. A chlorophyll a-binding site is contributed by histidine 118. Tyrosine 126 provides a ligand contact to pheophytin a. Positions 170 and 189 each coordinate [CaMn4O5] cluster. The chain crosses the membrane as a helical span at residues 197 to 218; that stretch reads FHMLGVAGVFGGSLFSAMHGSL. Histidine 198 contributes to the chlorophyll a binding site. Residues histidine 215 and 264–265 each bind a quinone; that span reads SF. Histidine 215 contacts Fe cation. Histidine 272 is a binding site for Fe cation. The helical transmembrane segment at 274-288 threads the bilayer; sequence FLAAWPVIGIWFTAL. [CaMn4O5] cluster is bound by residues histidine 332, glutamate 333, aspartate 342, and alanine 344.

This sequence belongs to the reaction center PufL/M/PsbA/D family. In terms of assembly, PSII is composed of 1 copy each of membrane proteins PsbA, PsbB, PsbC, PsbD, PsbE, PsbF, PsbH, PsbI, PsbJ, PsbK, PsbL, PsbM, PsbT, PsbX, PsbY, PsbZ, Psb30/Ycf12, at least 3 peripheral proteins of the oxygen-evolving complex and a large number of cofactors. It forms dimeric complexes. The D1/D2 heterodimer binds P680, chlorophylls that are the primary electron donor of PSII, and subsequent electron acceptors. It shares a non-heme iron and each subunit binds pheophytin, quinone, additional chlorophylls, carotenoids and lipids. D1 provides most of the ligands for the Mn4-Ca-O5 cluster of the oxygen-evolving complex (OEC). There is also a Cl(-1) ion associated with D1 and D2, which is required for oxygen evolution. The PSII complex binds additional chlorophylls, carotenoids and specific lipids. serves as cofactor. Tyr-161 forms a radical intermediate that is referred to as redox-active TyrZ, YZ or Y-Z.

It is found in the plastid. The protein resides in the chloroplast thylakoid membrane. It carries out the reaction 2 a plastoquinone + 4 hnu + 2 H2O = 2 a plastoquinol + O2. In terms of biological role, photosystem II (PSII) is a light-driven water:plastoquinone oxidoreductase that uses light energy to abstract electrons from H(2)O, generating O(2) and a proton gradient subsequently used for ATP formation. It consists of a core antenna complex that captures photons, and an electron transfer chain that converts photonic excitation into a charge separation. The D1/D2 (PsbA/PsbD) reaction center heterodimer binds P680, the primary electron donor of PSII as well as several subsequent electron acceptors. The polypeptide is Photosystem II protein D1 (Pleurastrum terricola (Filamentous green alga)).